The sequence spans 430 residues: Dihydroorotase (430 aa).

H57 and H59 together coordinate Zn(2+). Substrate-binding positions include H59 to R61 and N91. The Zn(2+) site is built by D151, H178, and H231. N277 lines the substrate pocket. Residue D304 coordinates Zn(2+). Residue D304 is part of the active site. Substrate is bound by residues H308 and P322–G323.

This sequence belongs to the metallo-dependent hydrolases superfamily. DHOase family. Class I DHOase subfamily. Zn(2+) is required as a cofactor.

The catalysed reaction is (S)-dihydroorotate + H2O = N-carbamoyl-L-aspartate + H(+). It functions in the pathway pyrimidine metabolism; UMP biosynthesis via de novo pathway; (S)-dihydroorotate from bicarbonate: step 3/3. In terms of biological role, catalyzes the reversible cyclization of carbamoyl aspartate to dihydroorotate. The protein is Dihydroorotase of Mycobacterium bovis (strain ATCC BAA-935 / AF2122/97).